We begin with the raw amino-acid sequence, 515 residues long: Maturase K (515 aa).

This sequence belongs to the intron maturase 2 family. MatK subfamily.

Its subcellular location is the plastid. It localises to the chloroplast. Usually encoded in the trnK tRNA gene intron. Probably assists in splicing its own and other chloroplast group II introns. This chain is Maturase K, found in Larix laricina (Tamarack).